We begin with the raw amino-acid sequence, 600 residues long: Epidermal growth factor receptor kinase substrate 8-like protein 3 (600 aa).

The region spanning 28–155 (QHRVEHLMTC…ALEEELEERP (128 aa)) is the PTB domain. 2 disordered regions span residues 152–245 (EERP…PERD) and 429–452 (LHFP…PLSS). The segment covering 204 to 214 (SERSISPSSRS) has biased composition (low complexity). Phosphoserine is present on Ser238. Residues 457–516 (RAALKMQVLYEFEARNAQELTVAQGEILEVLDQSKRWWLVKNEAGLTGYIPSNILEPLPA) form the SH3 domain.

The protein belongs to the EPS8 family. In terms of assembly, interacts with ABI1. Part of a complex that contains SOS1, ABI1 and EPS8L2. Interacts with FASLG. In terms of tissue distribution, detected in embryonic gut. Detected in adult testis, placenta, adrenal gland and intestine.

It localises to the cytoplasm. This is Epidermal growth factor receptor kinase substrate 8-like protein 3 (Eps8l3) from Mus musculus (Mouse).